The sequence spans 217 residues: 3,4-dihydroxy-2-butanone 4-phosphate synthase (217 aa).

D-ribulose 5-phosphate is bound by residues 37–38 (RE), Asp42, 150–154 (RRGHT), and Glu174. Glu38 contributes to the Mg(2+) binding site. Residue His153 coordinates Mg(2+).

This sequence belongs to the DHBP synthase family. In terms of assembly, homodimer. Mg(2+) is required as a cofactor. Mn(2+) serves as cofactor.

It catalyses the reaction D-ribulose 5-phosphate = (2S)-2-hydroxy-3-oxobutyl phosphate + formate + H(+). It functions in the pathway cofactor biosynthesis; riboflavin biosynthesis; 2-hydroxy-3-oxobutyl phosphate from D-ribulose 5-phosphate: step 1/1. Its function is as follows. Catalyzes the conversion of D-ribulose 5-phosphate to formate and 3,4-dihydroxy-2-butanone 4-phosphate. The polypeptide is 3,4-dihydroxy-2-butanone 4-phosphate synthase (Pseudoalteromonas translucida (strain TAC 125)).